Here is a 313-residue protein sequence, read N- to C-terminus: MEKIEHSTIATNGINMHVASAGSGPAVLFLHGFPELWYSWRHQLLYLSSLGYRAIAPDLRGFGDTDAPPSPSSYTAHHIVGDLVGLLDQLGVDQVFLVGDWGAMMAWYFCLFRPDRVKALVNLSVHFTPRNPAISPLDGFRLMLGDDFYVCKFQEPGVAEADFGSVDTATMFKKFLTMRDPRPPIIPNGFRSLATPEALPSWLTEEDIDYFAAKFAKTGFTGGFNYYRAIDLTWELTAPWSGSEIKVPTKFIVGDLDLVYHFPGVKEYIHGGGFKKDVPFLEEVVVMEGAAHFINQEKADEINSLIYDFIKQF.

Residues 25 to 299 (PAVLFLHGFP…AAHFINQEKA (275 aa)) enclose the AB hydrolase-1 domain. The active-site Nucleophile is D100. Position 149 (Y149) interacts with an epoxide. Y227 acts as the Proton donor in catalysis. The Proton acceptor role is filled by H292.

It belongs to the AB hydrolase superfamily. Epoxide hydrolase family. As to quaternary structure, homodimer. Highly expressed in fruits 15 days after anthesis (15-DAA).

It catalyses the reaction an epoxide + H2O = an ethanediol. The catalysed reaction is (24S)-24,25-epoxycucurbitadienol + H2O = (24R)-24,25-dihydroxycucurbitadienol. Its pathway is secondary metabolite biosynthesis; terpenoid biosynthesis. Functionally, epoxide hydrolase involved in the biosynthesis of cucurbitacin and mogroside tetracyclic triterpene natural products (e.g. siamenoside I and mogrosides IV, V and VI). Cucurbitacins have cytotoxic properties and exhibit deterrent taste as a defense barrier against herbivores. Mogrosides are nonsugar highly oxygenated compounds used as high-intensity zero-calorie sweeteners; they also possess pharmacological properties such as regulating immunity, lowering blood sugar and lipid levels, protecting the liver, and acting as antioxidants and antitumor agents. Catalyzes the hydrolysis of aromatic epoxide-containing substrates, such as the conversion of 24,25-epoxycucurbitadienol to 24,25-dihydroxycucurbitadienol. The protein is Epoxide hydrolase 1 of Siraitia grosvenorii (Monk's fruit).